Reading from the N-terminus, the 154-residue chain is Peptide methionine sulfoxide reductase MsrB (154 aa).

Residues 28–150 form the MsrB domain; sequence DQQWREQLSE…NSVSLIFNKI (123 aa). Zn(2+) is bound by residues cysteine 67, cysteine 70, cysteine 116, and cysteine 119. The active-site Nucleophile is the cysteine 139.

It belongs to the MsrB Met sulfoxide reductase family. Requires Zn(2+) as cofactor.

The catalysed reaction is L-methionyl-[protein] + [thioredoxin]-disulfide + H2O = L-methionyl-(R)-S-oxide-[protein] + [thioredoxin]-dithiol. This is Peptide methionine sulfoxide reductase MsrB from Vibrio vulnificus (strain YJ016).